Reading from the N-terminus, the 313-residue chain is 2,3-dihydroxyphenylpropionate/2,3-dihydroxicinnamic acid 1,2-dioxygenase (313 aa).

The active-site Proton donor is His115. Residue His179 is the Proton acceptor of the active site.

This sequence belongs to the LigB/MhpB extradiol dioxygenase family. As to quaternary structure, homotetramer. Fe(2+) is required as a cofactor.

It catalyses the reaction 3-(2,3-dihydroxyphenyl)propanoate + O2 = (2Z,4E)-2-hydroxy-6-oxonona-2,4-dienedioate + H(+). The enzyme catalyses (2E)-3-(2,3-dihydroxyphenyl)prop-2-enoate + O2 = (2Z,4E,7E)-2-hydroxy-6-oxonona-2,4,7-trienedioate + H(+). The protein operates within aromatic compound metabolism; 3-phenylpropanoate degradation. Functionally, catalyzes the non-heme iron(II)-dependent oxidative cleavage of 2,3-dihydroxyphenylpropionic acid and 2,3-dihydroxicinnamic acid into 2-hydroxy-6-ketononadienedioate and 2-hydroxy-6-ketononatrienedioate, respectively. This is 2,3-dihydroxyphenylpropionate/2,3-dihydroxicinnamic acid 1,2-dioxygenase from Mycolicibacterium smegmatis (strain ATCC 700084 / mc(2)155) (Mycobacterium smegmatis).